The primary structure comprises 394 residues: Elongation factor Tu (394 aa).

Positions 10-204 (KEHANIGTIG…AVDDYIPTPE (195 aa)) constitute a tr-type G domain. The G1 stretch occupies residues 19-26 (GHVDHGKT). 19–26 (GHVDHGKT) contacts GTP. T26 is a Mg(2+) binding site. A G2 region spans residues 60–64 (GITIN). The G3 stretch occupies residues 81–84 (DCPG). Residues 81-85 (DCPGH) and 136-139 (NKVD) each bind GTP. The tract at residues 136 to 139 (NKVD) is G4. The interval 174–176 (SAL) is G5.

The protein belongs to the TRAFAC class translation factor GTPase superfamily. Classic translation factor GTPase family. EF-Tu/EF-1A subfamily. In terms of assembly, monomer.

Its subcellular location is the cytoplasm. It catalyses the reaction GTP + H2O = GDP + phosphate + H(+). Functionally, GTP hydrolase that promotes the GTP-dependent binding of aminoacyl-tRNA to the A-site of ribosomes during protein biosynthesis. The sequence is that of Elongation factor Tu from Staphylococcus haemolyticus (strain JCSC1435).